Here is a 379-residue protein sequence, read N- to C-terminus: DNA replication and repair protein RecF (379 aa).

An ATP-binding site is contributed by glycine 30–serine 37.

It belongs to the RecF family.

The protein resides in the cytoplasm. Functionally, the RecF protein is involved in DNA metabolism; it is required for DNA replication and normal SOS inducibility. RecF binds preferentially to single-stranded, linear DNA. It also seems to bind ATP. The sequence is that of DNA replication and repair protein RecF from Thermosynechococcus vestitus (strain NIES-2133 / IAM M-273 / BP-1).